The sequence spans 269 residues: Ribosomal RNA small subunit methyltransferase A (269 aa).

S-adenosyl-L-methionine-binding residues include N18, L20, G45, E66, D91, and N112.

It belongs to the class I-like SAM-binding methyltransferase superfamily. rRNA adenine N(6)-methyltransferase family. RsmA subfamily.

The protein resides in the cytoplasm. It carries out the reaction adenosine(1518)/adenosine(1519) in 16S rRNA + 4 S-adenosyl-L-methionine = N(6)-dimethyladenosine(1518)/N(6)-dimethyladenosine(1519) in 16S rRNA + 4 S-adenosyl-L-homocysteine + 4 H(+). Functionally, specifically dimethylates two adjacent adenosines (A1518 and A1519) in the loop of a conserved hairpin near the 3'-end of 16S rRNA in the 30S particle. May play a critical role in biogenesis of 30S subunits. This chain is Ribosomal RNA small subunit methyltransferase A, found in Vibrio parahaemolyticus serotype O3:K6 (strain RIMD 2210633).